The chain runs to 425 residues: MVATPVKQKYDIKDISLAPQGRQRIEWAAREMPVLKQIRERFAQEKPFAGIRLVACCHVTTETANLAIALHAGGADSLLIASNPLSTQDDVAACLVADYGIPVYAIKGEDNETYHRHVQIALDHRPNIIIDDGSDVVATLVQERQHQLSDIIGTTEETTTGIVRLRAMFNDGVLTFPAMNVNDADTKHFYDNRYGTGQSTLDGIIRATNILLAGKTIVVAGYGWCGKGVAMRAKGMGADVIVTEISPVPAIEAAMDGFRVMPMAEAAHQGDIFITVTGNKHVIRPEHFAVMKDGAIVCNSGHFDIEIDLKSLKEQAKEVKEVRNFTEQYILPNGKSIIVIGEGRLVNLAAAEGHPSAVMDMSFANQALACEHLVKNKGQLEPGMHSIPVEVDQEIARLKLQAMGIAIDSLTPEQVEYINSWASGT.

3 residues coordinate substrate: Thr60, Asp132, and Glu157. 158–160 lines the NAD(+) pocket; that stretch reads TTT. Residues Lys187 and Asp191 each coordinate substrate. NAD(+)-binding positions include Asn192, 221–226, Glu244, Asn279, 300–302, and Asn347; these read GYGWCG and SGH.

This sequence belongs to the adenosylhomocysteinase family. Requires NAD(+) as cofactor.

The protein resides in the cytoplasm. The catalysed reaction is S-adenosyl-L-homocysteine + H2O = L-homocysteine + adenosine. It participates in amino-acid biosynthesis; L-homocysteine biosynthesis; L-homocysteine from S-adenosyl-L-homocysteine: step 1/1. May play a key role in the regulation of the intracellular concentration of adenosylhomocysteine. The polypeptide is Adenosylhomocysteinase (Synechocystis sp. (strain ATCC 27184 / PCC 6803 / Kazusa)).